A 150-amino-acid chain; its full sequence is Large ribosomal subunit protein bL9 (150 aa).

It belongs to the bacterial ribosomal protein bL9 family.

Functionally, binds to the 23S rRNA. The polypeptide is Large ribosomal subunit protein bL9 (Shewanella denitrificans (strain OS217 / ATCC BAA-1090 / DSM 15013)).